We begin with the raw amino-acid sequence, 354 residues long: DNA-binding protein EMBP-1 (354 aa).

3 disordered regions span residues 1 to 24, 106 to 193, and 230 to 273; these read MASS…TPAQ, SAAG…RSAS, and EVNA…RKQQ. 2 stretches are compositionally biased toward low complexity: residues 127-140 and 232-245; these read SSSG…QGSS and NAAA…SLSQ. The segment covering 246–265 has biased composition (basic and acidic residues); that stretch reads MDERELKRERRKQSNRESAR. A bZIP domain is found at 250–313; it reads ELKRERRKQS…KTMETENKKL (64 aa). Residues 252–271 are basic motif; sequence KRERRKQSNRESARRSRLRK. Residues 278–299 form a leucine-zipper region; sequence LAQKVSELTAANGTLRSELDQL.

Belongs to the bZIP family. As to quaternary structure, heterodimer.

The protein localises to the nucleus. Its function is as follows. Interacts specifically with the 8-bp sequence 5'-CACGTGGC-3'in the abscisic acid response element (ABARE). Also binds to the hexamer motif 5'-ACGTCA-3' of histone gene promoters. This Triticum aestivum (Wheat) protein is DNA-binding protein EMBP-1.